The following is a 551-amino-acid chain: Ubiquitin domain-containing protein DSK2b (551 aa).

In terms of domain architecture, Ubiquitin-like spans 18–93 (VAVNIRCSNG…IHMVRGSAPS (76 aa)). Residues 88–127 (RGSAPSSAPPPAPAASQTTAPSVTRGVGSDNSSNLGGASP) form a disordered region. STI1 domains follow at residues 143-184 (GNAM…QNLM) and 197-236 (NPQM…MREM). Residues 294-319 (QGVTTQGSDASNNSSTPNAGTGTIPN) are compositionally biased toward polar residues. Residues 294–336 (QGVTTQGSDASNNSSTPNAGTGTIPNANPLPNPWGATGGQTTA) are disordered. 2 STI1 domains span residues 373–410 (SPLG…MNQL) and 414–449 (NPQL…MQQM). Residues 455–475 (SLSQNRNTASQDAGQTGAATG) form a disordered region. Low complexity predominate over residues 465–475 (QDAGQTGAATG). The UBA domain maps to 504 to 548 (PPEERYATQLQQLQEMGFYDRAENIRALLATNGNVNAAVERLLGS).

As to quaternary structure, interacts with 'Lys-48'-linked polyubiquitin chains via its UBA domain. Interacts with RPN10 via its ubiquitin-like domain. Interacts with PEX2 and PEX12. As to expression, ubiquitous.

It localises to the nucleus. Its subcellular location is the cytoplasm. Its function is as follows. Binds and presumably selects ubiquitin-conjugates for destruction. Prefers multiubiquitin chains rather than single ubiquitins, with a binding affinity for 'Lys-48'-linked ubiquitin chains. Acts as a ubiquitin receptor that associates with the 26S proteasomal docking subunit RPN10 for the indirect recognition of ubiquitinated substrates of ubiquitin/26S proteasome-mediated proteolysis (UPP). In Arabidopsis thaliana (Mouse-ear cress), this protein is Ubiquitin domain-containing protein DSK2b (DSK2B).